The following is a 989-amino-acid chain: SWI/SNF-related matrix-associated actin-dependent regulator of chromatin subfamily A containing DEAD/H box 1 homolog (989 aa).

The tract at residues 1–288 (MSTTSDFQTG…RRAKRGETKN (288 aa)) is disordered. Positions 72–105 (DDDDEDYVDETMPSEDEEDFDNNEEDEDDDDYEE) are enriched in acidic residues. Positions 109–120 (RKRKAPSKKKLV) are enriched in basic residues. Residues 124–140 (ENYRREDSETPEPEMKR) are compositionally biased toward basic and acidic residues. The span at 187 to 200 (DDESEDDFINDEEI) shows a compositional bias: acidic residues. Basic and acidic residues-rich tracts occupy residues 201–221 (SEKGSGKGSEKEESEGSGKDS) and 241–250 (AQKEQKKKAE). Residues 251–276 (SDEDWEEDEDDMNADGDETPSDDSDI) are compositionally biased toward acidic residues. A compositionally biased stretch (basic and acidic residues) spans 277–288 (EERRAKRGETKN). Positions 406-574 (IMMYNKDLNA…ISLMYFVLSK (169 aa)) constitute a Helicase ATP-binding domain. 419-426 (DEMGLGKT) provides a ligand contact to ATP. A DEGH box motif is present at residues 525–528 (DEGH). The region spanning 757–912 (QLDVMLPEIQ…GVKGQLDEDA (156 aa)) is the Helicase C-terminal domain. The interval 941-989 (RYDDVEDDSGDSKNGIDAEEAAKKEDEAVKEPVEKEQQKEEESQPSTSA) is disordered. The segment covering 950–982 (GDSKNGIDAEEAAKKEDEAVKEPVEKEQQKEEE) has biased composition (basic and acidic residues).

Belongs to the SNF2/RAD54 helicase family.

The protein resides in the nucleus. Its subcellular location is the chromosome. The catalysed reaction is ATP + H2O = ADP + phosphate + H(+). Functionally, DNA helicase that possesses intrinsic ATP-dependent nucleosome-remodeling activity and is both required for DNA repair and heterochromatin organization. Promotes DNA end resection of double-strand breaks (DSBs) following DNA damage: probably acts by weakening histone DNA interactions in nucleosomes flanking DSBs. This chain is SWI/SNF-related matrix-associated actin-dependent regulator of chromatin subfamily A containing DEAD/H box 1 homolog, found in Caenorhabditis elegans.